The chain runs to 318 residues: Glutathione synthetase (318 aa).

The 186-residue stretch at 129–314 folds into the ATP-grasp domain; that stretch reads KLAITEFPDL…VPEMFAVALE (186 aa). ATP is bound at residue 155-211; it reads HAAQGDVIVKPLDDMGGTGIFRLQRSEPNLNAILETLTDNGTRTIMAQRYIPEIVKG. E285 and N287 together coordinate Mg(2+).

It belongs to the prokaryotic GSH synthase family. It depends on Mg(2+) as a cofactor. The cofactor is Mn(2+).

It catalyses the reaction gamma-L-glutamyl-L-cysteine + glycine + ATP = glutathione + ADP + phosphate + H(+). It functions in the pathway sulfur metabolism; glutathione biosynthesis; glutathione from L-cysteine and L-glutamate: step 2/2. This is Glutathione synthetase from Bordetella pertussis (strain Tohama I / ATCC BAA-589 / NCTC 13251).